The following is a 1044-amino-acid chain: MPPGVDCPMEFWTKEENQSVVVDFLLPTGVYLNFPVSRNANLSTIKQLLWHRAQYEPLFHMLSGPEAYVFTCINQTAEQQELEDEQRRLCDVQPFLPVLRLVAREGDRVKKLINSQISLLIGKGLHEFDSLCDPEVNDFRAKMCQFCEEAAARRQQLGWEAWLQYSFPLQLEPSAQTWGPGTLRLPNRALLVNVKFEGSEESFTFQVSTKDVPLALMACALRKKATVFRQPLVEQPEDYTLQVNGRHEYLYGSYPLCQFQYICSCLHSGLTPHLTMVHSSSILAMRDEQSNPAPQVQKPRAKPPPIPAKKPSSVSLWSLEQPFRIELIQGSKVNADERMKLVVQAGLFHGNEMLCKTVSSSEVSVCSEPVWKQRLEFDINICDLPRMARLCFALYAVIEKAKKARSTKKKSKKADCPIAWANLMLFDYKDQLKTGERCLYMWPSVPDEKGELLNPTGTVRSNPNTDSAAALLICLPEVAPHPVYYPALEKILELGRHSECVHVTEEEQLQLREILERRGSGELYEHEKDLVWKLRHEVQEHFPEALARLLLVTKWNKHEDVAQMLYLLCSWPELPVLSALELLDFSFPDCHVGSFAIKSLRKLTDDELFQYLLQLVQVLKYESYLDCELTKFLLDRALANRKIGHFLFWHLRSEMHVPSVALRFGLILEAYCRGSTHHMKVLMKQGEALSKLKALNDFVKLSSQKTPKPQTKELMHLCMRQEAYLEALSHLQSPLDPSTLLAEVCVEQCTFMDSKMKPLWIMYSNEEAGSGGSVGIIFKNGDDLRQDMLTLQMIQLMDVLWKQEGLDLRMTPYGCLPTGDRTGLIEVVLRSDTIANIQLNKSNMAATAAFNKDALLNWLKSKNPGEALDRAIEEFTLSCAGYCVATYVLGIGDRHSDNIMIRESGQLFHIDFGHFLGNFKTKFGINRERVPFILTYDFVHVIQQGKTNNSEKFERFRGYCERAYTILRRHGLLFLHLFALMRAAGLPELSCSKDIQYLKDSLALGKTEEEALKHFRVKFNEALRESWKTKVNWLAHNVSKDNRQ.

In terms of domain architecture, PI3K-ABD spans Glu16–Glu105. Residues Asn187 to His278 form the PI3K-RBD domain. The tract at residues Asp287–Ser312 is disordered. In terms of domain architecture, C2 PI3K-type spans Leu319–Pro476. A PIK helical domain is found at His497 to Gly674. At Tyr524 the chain carries Phosphotyrosine. The PI3K/PI4K catalytic domain maps to Cys745–Trp1027. A G-loop region spans residues Phe751–Lys757. The catalytic loop stretch occupies residues Gly890–Asn898. The tract at residues His909–Thr935 is activation loop. The residue at position 1039 (Ser1039) is a Phosphoserine; by autocatalysis.

This sequence belongs to the PI3/PI4-kinase family. In terms of assembly, heterodimer of a catalytic subunit PIK3CD and a p85 regulatory subunit (PIK3R1, PIK3R2 or PIK3R3). Interacts with ERAS. Interacts with HRAS. Post-translationally, autophosphorylation on Ser-1039 results in the almost complete inactivation of the lipid kinase activity. In terms of tissue distribution, in humans, the highest levels of expression are seen in peripheral blood mononuclear cells, spleen, and thymus, and low levels of expression in testes, uterus, colon, and small intestine but not in other tissues examined including prostate, heart, brain, and liver. Isoform 2 is expressed in normal thymus, lung and spleen tissues, and is detected at low levels in normal lysates from colon and ovarian biopsies, at elevated levels in lysates from colorectal tumors and is abundantly expressed in some ovarian tumors (at protein level). Both isoform 1 and isoform 2 are widely expressed. Isoform 1 is expressed predominantly in leukocytes.

Its subcellular location is the cytoplasm. The catalysed reaction is a 1,2-diacyl-sn-glycero-3-phospho-(1D-myo-inositol-4,5-bisphosphate) + ATP = a 1,2-diacyl-sn-glycero-3-phospho-(1D-myo-inositol-3,4,5-trisphosphate) + ADP + H(+). It carries out the reaction a 1,2-diacyl-sn-glycero-3-phospho-(1D-myo-inositol) + ATP = a 1,2-diacyl-sn-glycero-3-phospho-(1D-myo-inositol-3-phosphate) + ADP + H(+). It catalyses the reaction 1-octadecanoyl-2-(5Z,8Z,11Z,14Z)-eicosatetraenoyl-sn-glycero-3-phospho-1D-myo-inositol 4,5-bisphosphate + ATP = 1-octadecanoyl-2-(5Z,8Z,11Z,14Z-eicosatetraenoyl)-sn-glycero-3-phospho-(1D-myo-inositol 3,4,5-triphosphate) + ADP + H(+). It participates in phospholipid metabolism; phosphatidylinositol phosphate biosynthesis. Activated by growth factors and cytokine receptors through a tyrosine-kinase-dependent mechanism. Activated by RAS. IC87114 inhibits lipid kinase activity and is selective in cells at doses up to 5-10 uM. IC87114 blocks T-cell receptor signaling in naive and memory T-cells and reduces cytokine production by memory T-cells. Functionally, phosphoinositide-3-kinase (PI3K) phosphorylates phosphatidylinositol (PI) and its phosphorylated derivatives at position 3 of the inositol ring to produce 3-phosphoinositides. Uses ATP and PtdIns(4,5)P2 (phosphatidylinositol 4,5-bisphosphate) to generate phosphatidylinositol 3,4,5-trisphosphate (PIP3). PIP3 plays a key role by recruiting PH domain-containing proteins to the membrane, including AKT1 and PDPK1, activating signaling cascades involved in cell growth, survival, proliferation, motility and morphology. Mediates immune responses. Plays a role in B-cell development, proliferation, migration, and function. Required for B-cell receptor (BCR) signaling. Mediates B-cell proliferation response to anti-IgM, anti-CD40 and IL4 stimulation. Promotes cytokine production in response to TLR4 and TLR9. Required for antibody class switch mediated by TLR9. Involved in the antigen presentation function of B-cells. Involved in B-cell chemotaxis in response to CXCL13 and sphingosine 1-phosphate (S1P). Required for proliferation, signaling and cytokine production of naive, effector and memory T-cells. Required for T-cell receptor (TCR) signaling. Mediates TCR signaling events at the immune synapse. Activation by TCR leads to antigen-dependent memory T-cell migration and retention to antigenic tissues. Together with PIK3CG participates in T-cell development. Contributes to T-helper cell expansion and differentiation. Required for T-cell migration mediated by homing receptors SELL/CD62L, CCR7 and S1PR1 and antigen dependent recruitment of T-cells. Together with PIK3CG is involved in natural killer (NK) cell development and migration towards the sites of inflammation. Participates in NK cell receptor activation. Plays a role in NK cell maturation and cytokine production. Together with PIK3CG is involved in neutrophil chemotaxis and extravasation. Together with PIK3CG participates in neutrophil respiratory burst. Plays important roles in mast-cell development and mast cell mediated allergic response. Involved in stem cell factor (SCF)-mediated proliferation, adhesion and migration. Required for allergen-IgE-induced degranulation and cytokine release. The lipid kinase activity is required for its biological function. Isoform 2 may be involved in stabilizing total RAS levels, resulting in increased ERK phosphorylation and increased PI3K activity. This is Phosphatidylinositol 4,5-bisphosphate 3-kinase catalytic subunit delta isoform (PIK3CD) from Homo sapiens (Human).